Reading from the N-terminus, the 25-residue chain is Aurein-5.2 (25 aa).

In terms of tissue distribution, expressed by the skin dorsal glands.

It is found in the secreted. Functionally, has antimicrobial activity against L.lactis and S.uberis. The sequence is that of Aurein-5.2 from Ranoidea raniformis (Southern bell frog).